A 133-amino-acid polypeptide reads, in one-letter code: MKAIKAKSPHAALPVGARLVCADNTGARELQIIAVKGYKGVRRRLPNAGIGDMVVCSVKEGTPDMRKEVVNAVIVRQRKEYRRPDGTRVKFEDNAAVIVTPDGAPRGSEIRGPVAKEAAERWPRIGSIASIIV.

The protein belongs to the universal ribosomal protein uL14 family. In terms of assembly, part of the 50S ribosomal subunit. Forms a cluster with proteins L3 and L24e, part of which may contact the 16S rRNA in 2 intersubunit bridges.

In terms of biological role, binds to 23S rRNA. Forms part of two intersubunit bridges in the 70S ribosome. The polypeptide is Large ribosomal subunit protein uL14 (Methanopyrus kandleri (strain AV19 / DSM 6324 / JCM 9639 / NBRC 100938)).